Reading from the N-terminus, the 130-residue chain is Putative antitoxin VapB50 (130 aa).

Its function is as follows. Possibly the antitoxin component of a type II toxin-antitoxin (TA) system. Its cognate toxin is VapC50. The polypeptide is Putative antitoxin VapB50 (Mycobacterium tuberculosis (strain ATCC 25618 / H37Rv)).